The primary structure comprises 177 residues: Protein C (177 aa).

A compositionally biased stretch (polar residues) spans 1–10 (MSTKAWNASR). The interval 1 to 38 (MSTKAWNASRLSGPDPSTPWSLRKPLQHGSRPPKGKRL) is disordered.

It belongs to the morbillivirus protein C family.

This Rinderpest virus (strain RBOK) (RDV) protein is Protein C (P/V/C).